The chain runs to 531 residues: Acid-sensing ion channel 3 (531 aa).

The Cytoplasmic segment spans residues 1-43; it reads MKPTSGPEEARRPASDIRVFASNCSMHGLGHVFGPGSLSLRRG. The chain crosses the membrane as a helical span at residues 44 to 61; it reads MWAAAVVLSVATFLYQVA. The Extracellular segment spans residues 62 to 441; it reads ERVRYYREFH…SELLGDIGGQ (380 aa). Disulfide bonds link Cys-92–Cys-186, Cys-164–Cys-171, Cys-282–Cys-370, Cys-315–Cys-366, Cys-319–Cys-364, Cys-328–Cys-350, and Cys-330–Cys-342. N-linked (GlcNAc...) asparagine glycosylation occurs at Asn-175. The tract at residues 285–307 is disordered; that stretch reads ASLNPNYEPEPSDPLGSPSPSPS. N-linked (GlcNAc...) asparagine glycosylation occurs at Asn-398. A helical transmembrane segment spans residues 442-460; the sequence is MGLFIGASLLTILEILDYL. Positions 447–449 match the GAS motif; ion selectivity filter motif; it reads GAS. Over 461–531 the chain is Cytoplasmic; that stretch reads CEVFRDKVLG…HRTCYLVTQL (71 aa). A PDZ-binding motif is present at residues 528 to 531; the sequence is VTQL.

The protein belongs to the amiloride-sensitive sodium channel (TC 1.A.6) family. ASIC3 subfamily. In terms of assembly, can form homotrimeric channels. Heterotrimer; forms functional heterotrimers producing channel with different properties. Forms heterotrimers with ASIC2; gives rise to a biphasic current with a sustained current which discriminates poorly between Na(+) and K(+). Interacts with STOM; inhibits ASIC3 acid-evoked current. Interacts with LIN7B (via PDZ domain); increases ASIC3 expression at the plasma membrane. Interacts with MAGI1 (via PDZ domain); probably regulates ASIC3. Interacts with GOPC (via PDZ domain); probably regulates ASIC3. Interacts with DLG4 (via PDZ domain); reduces ASIC3 expression at the plasma membrane. Expressed by sensory neurons. Strongly expressed in brain, spinal cord, lung, lymph nodes, kidney, pituitary, heart and testis.

The protein localises to the cell membrane. The protein resides in the cytoplasm. The enzyme catalyses Na(+)(in) = Na(+)(out). The catalysed reaction is K(+)(in) = K(+)(out). It carries out the reaction Ca(2+)(in) = Ca(2+)(out). With respect to regulation, inhibited by the diuretic drug amiloride. Inhibited by the diuretic drug triamterene. Potentiated by the vertebrate neuropeptide FF (NPFF) and the related FMRFamide. Specifically and reversibly inhibited by the a sea anemone toxin APETx2. Forms pH-gated heterotrimeric sodium channels that act as postsynaptic excitatory receptors in the nervous system. Upon extracellular acidification, these channels generate a biphasic current with a fast inactivating and a slow sustained phase. ASIC3 is more sensitive to protons and gates between closed, open, and desensitized states faster than other ASICs. Displays high selectivity for sodium ions but can also permit the permeation of other cations. As a neuronal acid sensor, probably contributes to mechanoreception, acid nociception, and heat nociception. By forming heterotrimeric channels with ASIC2, generates a biphasic current with a fast inactivating and a slow sustained phase, which in sensory neurons is proposed to mediate the pain induced by acidosis that occurs in ischemic, damaged or inflamed tissues. The chain is Acid-sensing ion channel 3 from Homo sapiens (Human).